Reading from the N-terminus, the 206-residue chain is Large ribosomal subunit protein uL4 (206 aa).

The protein belongs to the universal ribosomal protein uL4 family. In terms of assembly, part of the 50S ribosomal subunit.

One of the primary rRNA binding proteins, this protein initially binds near the 5'-end of the 23S rRNA. It is important during the early stages of 50S assembly. It makes multiple contacts with different domains of the 23S rRNA in the assembled 50S subunit and ribosome. Functionally, forms part of the polypeptide exit tunnel. The protein is Large ribosomal subunit protein uL4 of Methylobacterium radiotolerans (strain ATCC 27329 / DSM 1819 / JCM 2831 / NBRC 15690 / NCIMB 10815 / 0-1).